A 589-amino-acid chain; its full sequence is Phosphoenolpyruvate carboxykinase [GTP] (589 aa).

Residues arginine 75 and 207-209 (YGG) each bind substrate. Residues lysine 216 and histidine 236 each contribute to the Mn(2+) site. Serine 258 serves as a coordination point for substrate. 259-264 (ASGKTN) is a binding site for GTP. Residue serine 260 is part of the active site. Aspartate 287 contributes to the Mn(2+) binding site. A substrate-binding site is contributed by 374-376 (NSR). GTP contacts are provided by residues arginine 376, arginine 407, and 500–503 (FAEN).

This sequence belongs to the phosphoenolpyruvate carboxykinase [GTP] family. Mn(2+) serves as cofactor.

The protein localises to the cytoplasm. It carries out the reaction oxaloacetate + GTP = phosphoenolpyruvate + GDP + CO2. It functions in the pathway carbohydrate biosynthesis; gluconeogenesis. In terms of biological role, catalyzes the conversion of oxaloacetate (OAA) to phosphoenolpyruvate (PEP), the rate-limiting step in the metabolic pathway that produces glucose from lactate and other precursors derived from the citric acid cycle. The sequence is that of Phosphoenolpyruvate carboxykinase [GTP] from Thermoplasma volcanium (strain ATCC 51530 / DSM 4299 / JCM 9571 / NBRC 15438 / GSS1).